The following is a 98-amino-acid chain: Small ribosomal subunit protein bS20 (98 aa).

The protein belongs to the bacterial ribosomal protein bS20 family.

In terms of biological role, binds directly to 16S ribosomal RNA. The polypeptide is Small ribosomal subunit protein bS20 (Prochlorococcus marinus (strain NATL1A)).